We begin with the raw amino-acid sequence, 339 residues long: Heat-inducible transcription repressor HrcA (339 aa).

Belongs to the HrcA family.

Its function is as follows. Negative regulator of class I heat shock genes (grpE-dnaK-dnaJ and groELS operons). Prevents heat-shock induction of these operons. This is Heat-inducible transcription repressor HrcA from Thiobacillus denitrificans (strain ATCC 25259 / T1).